The primary structure comprises 810 residues: Myoneurin (810 aa).

The region spanning 24-91 (CDCTVSIGQA…IYTGDLNMDR (68 aa)) is the BTB domain. 2 disordered regions span residues 122 to 146 (NVGS…DYEP) and 169 to 466 (VSMD…VKPV). A compositionally biased stretch (polar residues) spans 173–183 (EAQSSSEQTPQ). Composition is skewed to basic residues over residues 185-194 (VGKRGRKPKT) and 211-225 (GRGR…RPRV). The span at 229–238 (SSDSTDQSPA) shows a compositional bias: polar residues. Low complexity predominate over residues 243–253 (SPNGSSTSRGS). A DNA-binding region (a.T hook 1) is located at residues 254–266 (GRPRGRPRVRPLS). Basic and acidic residues predominate over residues 270 to 308 (EDPRNVEDDPAANKDQEVEKGNEEQKKETGEKDDGKNDT). The segment at residues 318–330 (KRGRGRPRIKPVS) is a DNA-binding region (a.T hook 2). Residues 331–346 (TEDQTTNSENVTTNAE) are compositionally biased toward polar residues. A compositionally biased stretch (basic and acidic residues) spans 350-361 (EPAKTKDSEGTG). Residues 361-373 (GRKRGRPRSKPVS) constitute a DNA-binding region (a.T hook 3). The span at 386-396 (SGEEAGEETSQ) shows a compositional bias: acidic residues. The segment covering 419 to 428 (ISKRKRILSR) has biased composition (basic residues). Residues 428–432 (RKLKE) carry the Nuclear localization signal motif. Positions 435–460 (AGDEEEEEEEEMDDEFENDNEDWAGE) are enriched in acidic residues. 7 C2H2-type zinc fingers span residues 472–494 (PICN…MRIH), 500–522 (YQCT…MRIH), 528–551 (FTCT…RMHH), 557–579 (YKCE…IRKH), 585–607 (YECG…KRRH), 613–635 (YICD…NRKH), and 641–663 (YICL…MDVH).

The protein belongs to the krueppel C2H2-type zinc-finger protein family.

Its subcellular location is the nucleus. The sequence is that of Myoneurin (mynn) from Danio rerio (Zebrafish).